We begin with the raw amino-acid sequence, 494 residues long: Gram-negative bacteria-binding protein 1 (494 aa).

The first 19 residues, 1–19, serve as a signal peptide directing secretion; that stretch reads MPGLCIGILLLIGFGCTTA. Positions 20 to 120 constitute a CBM39 domain; the sequence is YKIPTPTVEL…QPLPVCNLGG (101 aa). 2 N-linked (GlcNAc...) asparagine glycosylation sites follow: N56 and N81. The segment at 126-160 is disordered; sequence GCSPGDDDFTDDNQLSTEDSALEPTAPSVCEPSES. The GH16 domain maps to 135–494; that stretch reads TDDNQLSTED…DYVRVFATDN (360 aa). N-linked (GlcNAc...) asparagine glycosylation occurs at N185.

The protein belongs to the insect beta-1,3-glucan binding protein family.

Its subcellular location is the cell membrane. Functionally, plays a key role in innate immunity by acting as a pattern recognition receptor for beta-1,3-glucan from fungi and lipopolysaccharide from Gram-negative bacteria. Upon recognition of invading microorganism-derived products, acts upstream of protease spz processing enzyme SPE to activate the Toll pathway and to induce the expression of antimicrobial peptides drosomycin, cecropin and attacin. The chain is Gram-negative bacteria-binding protein 1 from Drosophila melanogaster (Fruit fly).